The chain runs to 343 residues: Protein RecA (343 aa).

Residue 64 to 71 coordinates ATP; it reads GPESSGKT.

The protein belongs to the RecA family.

Its subcellular location is the cytoplasm. Its function is as follows. Can catalyze the hydrolysis of ATP in the presence of single-stranded DNA, the ATP-dependent uptake of single-stranded DNA by duplex DNA, and the ATP-dependent hybridization of homologous single-stranded DNAs. It interacts with LexA causing its activation and leading to its autocatalytic cleavage. The protein is Protein RecA of Cereibacter sphaeroides (strain ATCC 17023 / DSM 158 / JCM 6121 / CCUG 31486 / LMG 2827 / NBRC 12203 / NCIMB 8253 / ATH 2.4.1.) (Rhodobacter sphaeroides).